A 228-amino-acid polypeptide reads, in one-letter code: Histidine decarboxylase (228 aa).

Substrate is bound at residue His30. Position 143 is an N6-(pyridoxal phosphate)lysine (Lys143).

The protein belongs to the group II decarboxylase family. Homotetramer. Requires pyridoxal 5'-phosphate as cofactor.

The enzyme catalyses L-histidine + H(+) = histamine + CO2. The polypeptide is Histidine decarboxylase (hdc) (Raoultella ornithinolytica (Klebsiella ornithinolytica)).